Consider the following 203-residue polypeptide: MIDYLRGTLTDIDHQYAVVEVHGVGYQVYCPNPYEFEKERDSVITIYTFQYVREDVIRLYGFRTKEKRSLFEKLLNVSGIGPKGALAILATGQPEHVIQAIEEEDEAFLVKFPGVGKKTARQIILDLKGKVDELHPGLFSQKEEQPKPHEKNDGNQALDEAMEALKALGYVEKELKKVKPKLEQETLTTDAYIKKALQLMLNR.

The segment at 1-63 is domain I; sequence MIDYLRGTLT…EDVIRLYGFR (63 aa). Positions 64 to 142 are domain II; sequence TKEKRSLFEK…ELHPGLFSQK (79 aa). The interval 143 to 152 is flexible linker; that stretch reads EEQPKPHEKN. The interval 153–203 is domain III; that stretch reads DGNQALDEAMEALKALGYVEKELKKVKPKLEQETLTTDAYIKKALQLMLNR.

Belongs to the RuvA family. Homotetramer. Forms an RuvA(8)-RuvB(12)-Holliday junction (HJ) complex. HJ DNA is sandwiched between 2 RuvA tetramers; dsDNA enters through RuvA and exits via RuvB. An RuvB hexamer assembles on each DNA strand where it exits the tetramer. Each RuvB hexamer is contacted by two RuvA subunits (via domain III) on 2 adjacent RuvB subunits; this complex drives branch migration. In the full resolvosome a probable DNA-RuvA(4)-RuvB(12)-RuvC(2) complex forms which resolves the HJ.

The protein resides in the cytoplasm. Its function is as follows. The RuvA-RuvB-RuvC complex processes Holliday junction (HJ) DNA during genetic recombination and DNA repair, while the RuvA-RuvB complex plays an important role in the rescue of blocked DNA replication forks via replication fork reversal (RFR). RuvA specifically binds to HJ cruciform DNA, conferring on it an open structure. The RuvB hexamer acts as an ATP-dependent pump, pulling dsDNA into and through the RuvAB complex. HJ branch migration allows RuvC to scan DNA until it finds its consensus sequence, where it cleaves and resolves the cruciform DNA. In Halalkalibacterium halodurans (strain ATCC BAA-125 / DSM 18197 / FERM 7344 / JCM 9153 / C-125) (Bacillus halodurans), this protein is Holliday junction branch migration complex subunit RuvA.